Consider the following 261-residue polypeptide: Small ribosomal subunit protein uS2 (261 aa).

Residues 224-261 (GKQGQDDSEDVEKEMADKAAAENDDEESIEEVVEKSED) form a disordered region. Over residues 245–254 (ENDDEESIEE) the composition is skewed to acidic residues.

This sequence belongs to the universal ribosomal protein uS2 family.

In Lactobacillus gasseri (strain ATCC 33323 / DSM 20243 / BCRC 14619 / CIP 102991 / JCM 1131 / KCTC 3163 / NCIMB 11718 / NCTC 13722 / AM63), this protein is Small ribosomal subunit protein uS2.